Consider the following 103-residue polypeptide: Large ribosomal subunit protein uL23 (103 aa).

The protein belongs to the universal ribosomal protein uL23 family. As to quaternary structure, part of the 50S ribosomal subunit. Contacts protein L29, and trigger factor when it is bound to the ribosome.

In terms of biological role, one of the early assembly proteins it binds 23S rRNA. One of the proteins that surrounds the polypeptide exit tunnel on the outside of the ribosome. Forms the main docking site for trigger factor binding to the ribosome. This is Large ribosomal subunit protein uL23 from Prochlorococcus marinus (strain NATL1A).